The chain runs to 392 residues: Phosphoglycerate kinase (392 aa).

Substrate is bound by residues aspartate 21 to asparagine 23, arginine 36, histidine 59 to arginine 62, arginine 114, and arginine 147. Residues lysine 198, glutamate 320, and glycine 346 to threonine 349 each bind ATP.

Belongs to the phosphoglycerate kinase family. As to quaternary structure, monomer.

The protein localises to the cytoplasm. It carries out the reaction (2R)-3-phosphoglycerate + ATP = (2R)-3-phospho-glyceroyl phosphate + ADP. The protein operates within carbohydrate degradation; glycolysis; pyruvate from D-glyceraldehyde 3-phosphate: step 2/5. This Neisseria meningitidis serogroup C / serotype 2a (strain ATCC 700532 / DSM 15464 / FAM18) protein is Phosphoglycerate kinase.